The following is a 325-amino-acid chain: D site-binding protein (325 aa).

Disordered regions lie at residues 1–100 (MARP…PGLL), 124–198 (LEHG…DPDT), and 212–255 (LALS…EQKD). The segment covering 17 to 28 (GPTGAPPGGGAL) has biased composition (gly residues). Composition is skewed to low complexity over residues 29-38 (LGLRSLLQGT) and 71-80 (AGPADASAGA). Position 86 is a phosphoserine (Ser-86). Low complexity predominate over residues 88–100 (RGRPGAAPGPGLL). Over residues 129-153 (PPSPPPPGGPSPAPSPVRTPAPSPR) the composition is skewed to pro residues. A compositionally biased stretch (low complexity) spans 166-176 (PGHAPARAALG). Over residues 221–236 (ETFDPRRHRFSEEELK) the composition is skewed to basic and acidic residues. Residues 255–318 (DEKYWSRRYK…SHYRAVLSRY (64 aa)) enclose the bZIP domain. Residues 257 to 279 (KYWSRRYKNNEAAKRSRDARRLK) form a basic motif region. The leucine-zipper stretch occupies residues 283-297 (ISVRAAFLEKENALL).

This sequence belongs to the bZIP family. PAR subfamily. In terms of assembly, binds DNA as a homodimer or a heterodimer. Can form a heterodimer with TEF.

The protein resides in the nucleus. Functionally, this transcriptional activator recognizes and binds to the sequence 5'-RTTAYGTAAY-3' found in the promoter of genes such as albumin, CYP2A4 and CYP2A5. It is not essential for circadian rhythm generation, but modulates important clock output genes. May be a direct target for regulation by the circadian pacemaker component clock. May affect circadian period and sleep regulation. The chain is D site-binding protein (DBP) from Bos taurus (Bovine).